A 314-amino-acid chain; its full sequence is Ribosomal RNA small subunit methyltransferase H (314 aa).

S-adenosyl-L-methionine contacts are provided by residues 35 to 37 (GGH), Asp55, Phe79, Asp101, and Gln108. Positions 276 to 296 (QGGQTLKPVGKKLMPSEAEVA) are disordered.

It belongs to the methyltransferase superfamily. RsmH family.

The protein localises to the cytoplasm. It catalyses the reaction cytidine(1402) in 16S rRNA + S-adenosyl-L-methionine = N(4)-methylcytidine(1402) in 16S rRNA + S-adenosyl-L-homocysteine + H(+). In terms of biological role, specifically methylates the N4 position of cytidine in position 1402 (C1402) of 16S rRNA. The sequence is that of Ribosomal RNA small subunit methyltransferase H from Pectobacterium atrosepticum (strain SCRI 1043 / ATCC BAA-672) (Erwinia carotovora subsp. atroseptica).